The following is a 249-amino-acid chain: Green-light absorbing proteorhodopsin (249 aa).

Positions 1 to 17 (MKLLLILGSVIALPTFA) are cleaved as a signal peptide. Transmembrane regions (helical) follow at residues 30–49 (GVSF…FFFV), 62–84 (LTVS…GVWI), 99–121 (LLTV…NVAG), 128–147 (LVGS…GIMA), 151–168 (AFII…ELWA), 189–211 (MMYI…YLMG), and 221–243 (LIYN…NVAV). At Lys-231 the chain carries N6-(retinylidene)lysine.

The protein belongs to the archaeal/bacterial/fungal opsin family. Post-translationally, contains one covalently linked retinal chromophore.

Its subcellular location is the cell membrane. Functionally, light-driven proton pump that generates photothrophic energy. In Gamma-proteobacterium EBAC31A08, this protein is Green-light absorbing proteorhodopsin.